Here is a 471-residue protein sequence, read N- to C-terminus: Glutamate--tRNA ligase (471 aa).

A 'HIGH' region motif is present at residues proline 9–glycine 19. A 'KMSKS' region motif is present at residues lysine 237–arginine 241. Lysine 240 is a binding site for ATP.

It belongs to the class-I aminoacyl-tRNA synthetase family. Glutamate--tRNA ligase type 1 subfamily. Monomer.

Its subcellular location is the cytoplasm. It catalyses the reaction tRNA(Glu) + L-glutamate + ATP = L-glutamyl-tRNA(Glu) + AMP + diphosphate. In terms of biological role, catalyzes the attachment of glutamate to tRNA(Glu) in a two-step reaction: glutamate is first activated by ATP to form Glu-AMP and then transferred to the acceptor end of tRNA(Glu). The protein is Glutamate--tRNA ligase of Pectobacterium atrosepticum (strain SCRI 1043 / ATCC BAA-672) (Erwinia carotovora subsp. atroseptica).